Consider the following 316-residue polypeptide: Olfactory receptor 10H3 (316 aa).

At 1–25 (MPGQNYRTISEFILSGFSAFPQQLL) the chain is on the extracellular side. A helical membrane pass occupies residues 26 to 46 (PVLFLLYLLMFLFTLLGNLLI). At 47–54 (MATVWIER) the chain is on the cytoplasmic side. Residues 55–75 (RLHTPMYLFLCALSISEILFT) form a helical membrane-spanning segment. The Extracellular portion of the chain corresponds to 76 to 99 (VAITPRMLADLLFTHRSITFVACA). Cysteines 98 and 190 form a disulfide. Residues 100 to 120 (IQMFFSFMFGFTHSFLLMVMG) traverse the membrane as a helical segment. Residues 121 to 139 (YDHYVTICHPLHYNMLMSP) are Cytoplasmic-facing. The chain crosses the membrane as a helical span at residues 140 to 160 (RGCAHLVAWTWAGGSVMGMMV). Residues 161 to 197 (TMMVFHLTFCGSNVIHHFLCHVLSLLKLACGSKTSSV) are Extracellular-facing. The chain crosses the membrane as a helical span at residues 198-218 (IMGVMLVCVTALIGCLFLIIL). The Cytoplasmic segment spans residues 219 to 238 (SFVFIVAAILRIPSAEGRHK). Residues 239 to 259 (TFSTCVSHLTVVVMHYSFASL) form a helical membrane-spanning segment. At 260 to 272 (IYLKPKGLHSMYS) the chain is on the extracellular side. Residues 273 to 293 (DALMATTYTVFTPFLSPIIFS) form a helical membrane-spanning segment. At 294–316 (LRNKELKNAINKNFCRRFCPLSS) the chain is on the cytoplasmic side.

This sequence belongs to the G-protein coupled receptor 1 family.

The protein resides in the cell membrane. In terms of biological role, odorant receptor. This Homo sapiens (Human) protein is Olfactory receptor 10H3 (OR10H3).